The sequence spans 152 residues: Ninjurin-1 (152 aa).

At M1 the chain carries N-acetylmethionine. Residues 1–10 (MDPGTEEYEL) are compositionally biased toward acidic residues. A disordered region spans residues 1 to 30 (MDPGTEEYELNGDLRPGSPGSPDASPPRWG). Topologically, residues 1–78 (MDPGTEEYEL…EQGNEFAFFV (78 aa)) are extracellular. Low complexity predominate over residues 16–27 (PGSPGSPDASPP). Phosphoserine occurs at positions 18, 21, and 25. The segment at 26–37 (PPRWGLRNRPIN) is N-terminal adhesion motif. Residues 40 to 69 (HYANKKSAAESMLDIALLMANASQLKAVVE) form a required to induce plasma membrane rupture region. Positions 44-55 (KKSAAESMLDIA) are helix alpha1. The tract at residues 58 to 74 (MANASQLKAVVEQGNEF) is helix alpha2. N60 carries N-linked (GlcNAc...) asparagine glycosylation. A helical transmembrane segment spans residues 79-103 (PLVVLISISLVLQIGVGVLLIFLVK). The Cytoplasmic segment spans residues 104-113 (YDLNNPAKHA). A helical membrane pass occupies residues 114-138 (KLDFLNNLATGLVFIIVVVNIFITA). The Extracellular portion of the chain corresponds to 139–152 (FGVQKPVMDVAPRQ).

Belongs to the ninjurin family. Homodimer; in absence of death stimuli, forms an inactive homodimer. Homooligomer; in response to death stimuli, homooligomerizes into long, highly branched filaments and large, ring-shaped structures in the membrane. The topology shown in the entry corresponds to the activated form. In terms of processing, cleaved by MMP9 protease to generate the Secreted ninjurin-1 form. N-linked glycosylation is required for homooligomerization.

It localises to the cell membrane. It is found in the synaptic cell membrane. Its subcellular location is the secreted. In response to death stimuli, homooligomerizes and disrupts membrane integrity by introducing the hydrophilic faces of alpha1 and alpha2 helices into the hydrophobic membrane. Homooligomerization and ability to mediate plasma membrane rupture is inhibited by glycine; it is unclear whether glycine directly or indirectly inhibits homooligomerization. In normal conditions, NINJ1 is autoinhibited via formation of a homodimer: in the inactive homodimer, the alpha1 and alpha2 helices (residues 44-74) form a single transmembrane region without a kink, in which hydrophilic faces of alpha1 and alpha2 helices are sequestered. Functionally, effector of various programmed cell death, such as pyroptosis and necroptosis, which mediates plasma membrane rupture (cytolysis). Oligomerizes in response to death stimuli and forms ring-like structures on the plasma membrane: acts by cutting and shedding membrane disks, like a cookie cutter, leading to membrane damage and loss that cannot be repaired by the cell. Plasma membrane rupture leads to release intracellular molecules named damage-associated molecular patterns (DAMPs) that propagate the inflammatory response. Mechanistically, mediates plasma membrane rupture by introducing hydrophilic faces of 2 alpha helices into the hydrophobic membrane. Induces plasma membrane rupture downstream of Gasdermin (GSDMA, GSDMB, GSDMC, GSDMD, or GSDME) or MLKL during pyroptosis or necroptosis, respectively. Acts as an effector of PANoptosis downstream of CASP1, CASP4, CASP8 and RIPK3. Also induces plasma membrane rupture in response to cell swelling caused by osmotic stress and ferroptosis downstream of lipid peroxidation. Acts as a regulator of Toll-like receptor 4 (TLR4) signaling triggered by lipopolysaccharide (LPS) during systemic inflammation; directly binds LPS. Involved in leukocyte migration during inflammation by promoting transendothelial migration of macrophages via homotypic binding. Promotes the migration of monocytes across the brain endothelium to central nervous system inflammatory lesions. Also acts as a homophilic transmembrane adhesion molecule involved in various processes such as axonal growth, cell chemotaxis and angiogenesis. Promotes cell adhesion by mediating homophilic interactions via its extracellular N-terminal adhesion motif (N-NAM). Involved in the progression of the inflammatory stress by promoting cell-to-cell interactions between immune cells and endothelial cells. Plays a role in nerve regeneration by promoting maturation of Schwann cells. Acts as a regulator of angiogenesis. Promotes the formation of new vessels by mediating the interaction between capillary pericyte cells and endothelial cells. Promotes osteoclasts development by enhancing the survival of prefusion osteoclasts. Also involved in striated muscle growth and differentiation. Its function is as follows. Secreted form generated by cleavage, which has chemotactic activity. Acts as an anti-inflammatory mediator by promoting monocyte recruitment, thereby ameliorating atherosclerosis. This is Ninjurin-1 from Rattus norvegicus (Rat).